The following is a 1207-amino-acid chain: Histidine kinase 1 (1207 aa).

Polar residues predominate over residues Met-1–Ile-10. Positions Met-1–Ser-20 are disordered. Residues Met-1–Arg-81 lie on the Cytoplasmic side of the membrane. Residues Leu-82–Phe-102 form a helical membrane-spanning segment. Topologically, residues Thr-103 to Thr-446 are extracellular. Residues Leu-447–Ile-467 traverse the membrane as a helical segment. Topologically, residues Leu-468–Ala-1207 are cytoplasmic. In terms of domain architecture, Histidine kinase spans Asn-505–Thr-763. His-508 carries the phosphohistidine; by autocatalysis modification. Disordered regions lie at residues Asp-964–Ser-987 and Asp-1000–Glu-1021. Over residues Ser-975–Val-984 the composition is skewed to basic and acidic residues. Positions Asp-1000 to Thr-1014 are enriched in low complexity. The Response regulatory domain occupies Arg-1045–Thr-1196. Asp-1127 carries the 4-aspartylphosphate modification.

In terms of assembly, interacts with AHP2, depending of the phosphorylation state of Asp-1075 in the receiver domain, but probably not with AHP1 and AHP3. Post-translationally, autophosphorylated predominantly on His residues. Activation probably requires a transfer of a phosphate group between a His in the transmitter domain and an Asp of the receiver domain. Mostly expressed in roots, and, to a lower extent, in stems, leaves and flowers.

The protein resides in the cell membrane. It catalyses the reaction ATP + protein L-histidine = ADP + protein N-phospho-L-histidine.. Its function is as follows. Functions as an osmosensor histidine kinase that detects water stress and transmits the stress signal to a downstream MAPK cascade. This protein undergoes an ATP-dependent autophosphorylation at a conserved histidine residue in the kinase core, and a phosphoryl group is then transferred to a conserved aspartate residue in the receiver domain. Positive regulator of drought and salt stress responses, and abscisic acid (ABA) signaling. Confers drought tolerance, probably by regulating levels of ABA accumulation. Plays a redundant role in regulating plant growth and development. Required for the regulation of desiccation processes during seed formation. The polypeptide is Histidine kinase 1 (AHK1) (Arabidopsis thaliana (Mouse-ear cress)).